The sequence spans 256 residues: MRFDVLTLFPELFAPFQAVGVTRRAFESGAIDLKLWQPRDFADNAYRRVDDRPYGGGPGMVMLVEPLERALAAVRDDQAAAGAARTPVLLFSPAGAPLTQRRVEALASEAGAVLVCGRYEGIDQRFIDRHVDEELSLGDFVLSGGELPALALVDAVARLQPGVLNDQTSHQQDSFSDGLLDCPHYSRPEHLGDAAADGVPATLMSGHHAEIARWRRERQLELTARRRPDLIAAARAQGRLTKADERYLQSLPGLGL.

S-adenosyl-L-methionine is bound by residues Gly-117 and 137 to 142 (LGDFVL).

The protein belongs to the RNA methyltransferase TrmD family. As to quaternary structure, homodimer.

It localises to the cytoplasm. The catalysed reaction is guanosine(37) in tRNA + S-adenosyl-L-methionine = N(1)-methylguanosine(37) in tRNA + S-adenosyl-L-homocysteine + H(+). Specifically methylates guanosine-37 in various tRNAs. The sequence is that of tRNA (guanine-N(1)-)-methyltransferase from Methylibium petroleiphilum (strain ATCC BAA-1232 / LMG 22953 / PM1).